A 179-amino-acid polypeptide reads, in one-letter code: Shikimate kinase (179 aa).

Residue 11-16 (GAGKTT) coordinates ATP. T15 serves as a coordination point for Mg(2+). Positions 33, 57, and 79 each coordinate substrate. Residue R118 participates in ATP binding. R140 is a substrate binding site.

Belongs to the shikimate kinase family. Monomer. Mg(2+) is required as a cofactor.

The protein localises to the cytoplasm. It catalyses the reaction shikimate + ATP = 3-phosphoshikimate + ADP + H(+). It functions in the pathway metabolic intermediate biosynthesis; chorismate biosynthesis; chorismate from D-erythrose 4-phosphate and phosphoenolpyruvate: step 5/7. In terms of biological role, catalyzes the specific phosphorylation of the 3-hydroxyl group of shikimic acid using ATP as a cosubstrate. This chain is Shikimate kinase, found in Bacteroides fragilis (strain ATCC 25285 / DSM 2151 / CCUG 4856 / JCM 11019 / LMG 10263 / NCTC 9343 / Onslow / VPI 2553 / EN-2).